Here is a 377-residue protein sequence, read N- to C-terminus: 6-oxocyclohex-1-ene-1-carbonyl-CoA hydrolase (377 aa).

This sequence belongs to the enoyl-CoA hydratase/isomerase family. As to quaternary structure, homotetramer.

The enzyme catalyses 6-oxocyclohex-1-ene-1-carbonyl-CoA + 2 H2O = 3-hydroxy-6-carboxyhexanoyl-CoA + H(+). It participates in aromatic compound metabolism; benzoyl-CoA degradation. Functionally, involved in the central benzoyl-CoA catabolism. Catalyzes the addition of one molecule of water to the double bond and the hydrolytic cleavage of C-C bond in the alicyclic ring, 6-oxocyclohex-1-ene-1-carbonyl-CoA (6-OCH-CoA) to yield 3-hydroxypimelyl-CoA. The polypeptide is 6-oxocyclohex-1-ene-1-carbonyl-CoA hydrolase (oah) (Thauera aromatica).